Reading from the N-terminus, the 331-residue chain is Adenosine deaminase (331 aa).

The Zn(2+) site is built by His12 and His14. 3 residues coordinate substrate: His14, Asp16, and Gly170. His197 is a binding site for Zn(2+). Glu200 (proton donor) is an active-site residue. Residue Asp278 participates in Zn(2+) binding.

It belongs to the metallo-dependent hydrolases superfamily. Adenosine and AMP deaminases family. Adenosine deaminase subfamily. The cofactor is Zn(2+).

The enzyme catalyses adenosine + H2O + H(+) = inosine + NH4(+). The catalysed reaction is 2'-deoxyadenosine + H2O + H(+) = 2'-deoxyinosine + NH4(+). In terms of biological role, catalyzes the hydrolytic deamination of adenosine and 2-deoxyadenosine. This Clostridium botulinum (strain 657 / Type Ba4) protein is Adenosine deaminase.